Here is a 397-residue protein sequence, read N- to C-terminus: MKLSQRVQAIKPSPTLAVTAKAARLKAEGKNIIGLGAGEPDFDTPLHIKDAAITAIRNGFTKYTAVGGTASLKQAIISKFKRENSLEFMPGEILVSSGGKQSFFNLVLATIDPGDEVIIPAPYWVSYPDIVLIAEGKPVFIDTGIEEKFKISPDQLEKAITPRTRMFVVNSPSNPSGSVYSLEELQALGAVLRKYPDILIATDDMYEHILLSGDGFVNILNACPDLKARTVVLNGVSKAYAMTGWRIGYCGGPAAIITAMENIQSQSTSNPNSIAQVAAEAALNGDQSCMVPMIEAFRERNQFLTNALNSIAGIHCLLSEGAFYAFVDVRQAISRLNTQQILQNSSDIAFCNYVLEKAEVAAVPGSAFGCEGYMRLSFATSMDNLQEAVKRIASLLS.

Residues Gly38, Trp124, and Asn174 each contribute to the L-aspartate site. At Lys238 the chain carries N6-(pyridoxal phosphate)lysine. Arg375 lines the L-aspartate pocket.

The protein belongs to the class-I pyridoxal-phosphate-dependent aminotransferase family. Homodimer. The cofactor is pyridoxal 5'-phosphate.

It localises to the cytoplasm. It carries out the reaction L-aspartate + 2-oxoglutarate = oxaloacetate + L-glutamate. The enzyme catalyses L-arogenate + 2-oxoglutarate = prephenate + L-glutamate. Catalyzes the reversible conversion of aspartate and 2-oxoglutarate to glutamate and oxaloacetate. Can also transaminate prephenate in the presence of glutamate, with lower efficiency. This Nitrosomonas europaea (strain ATCC 19718 / CIP 103999 / KCTC 2705 / NBRC 14298) protein is Aspartate/prephenate aminotransferase.